The primary structure comprises 204 residues: Large ribosomal subunit protein bL25 (204 aa).

The protein belongs to the bacterial ribosomal protein bL25 family. CTC subfamily. In terms of assembly, part of the 50S ribosomal subunit; part of the 5S rRNA/L5/L18/L25 subcomplex. Contacts the 5S rRNA. Binds to the 5S rRNA independently of L5 and L18.

Functionally, this is one of the proteins that binds to the 5S RNA in the ribosome where it forms part of the central protuberance. This is Large ribosomal subunit protein bL25 from Rhizobium etli (strain ATCC 51251 / DSM 11541 / JCM 21823 / NBRC 15573 / CFN 42).